The primary structure comprises 190 residues: Lysozyme g (190 aa).

The segment covering 1 to 10 has biased composition (basic and acidic residues); it reads MPYGKIEDIK. Positions 1–31 are disordered; sequence MPYGKIEDIKTSGASDVTAAQDGLKEGGWKS. Residues Glu71 and Asp84 contribute to the active site.

This sequence belongs to the glycosyl hydrolase 23 family.

It carries out the reaction Hydrolysis of (1-&gt;4)-beta-linkages between N-acetylmuramic acid and N-acetyl-D-glucosamine residues in a peptidoglycan and between N-acetyl-D-glucosamine residues in chitodextrins.. The sequence is that of Lysozyme g from Takifugu rubripes (Japanese pufferfish).